Reading from the N-terminus, the 379-residue chain is Probable protein arginine N-methyltransferase 6.1 (379 aa).

Residues 1–35 are disordered; it reads MLPSHLNGHSPLARRRPRLSAASPPATGDSDAAAA. Residues 19 to 35 are compositionally biased toward low complexity; it reads LSAASPPATGDSDAAAA. The SAM-dependent MTase PRMT-type domain occupies 45 to 379; sequence DRIYFQSYSH…FLNIQLDCTM (335 aa). Positions 58, 67, 91, 113, and 142 each coordinate S-adenosyl-L-methionine. Catalysis depends on residues Glu156 and Glu165.

Belongs to the class I-like SAM-binding methyltransferase superfamily. Protein arginine N-methyltransferase family. PRMT6 subfamily.

Functionally, arginine methyltransferase that can both catalyze the formation of omega-N monomethylarginine (MMA) and asymmetrical dimethylarginine (aDMA). The protein is Probable protein arginine N-methyltransferase 6.1 (PRMT6.1) of Oryza sativa subsp. indica (Rice).